The chain runs to 903 residues: uncharacterized protein (903 aa).

This is an uncharacterized protein from Gallid herpesvirus 2 (strain Chicken/Md5/ATCC VR-987) (GaHV-2).